A 440-amino-acid chain; its full sequence is Cell division protein FtsA (440 aa).

Residues 396–440 are disordered; the sequence is VSSSEEQEQHHHQNEVQQRPKGKQKTQAEHNKQSKMKKLLSMFWE.

This sequence belongs to the FtsA/MreB family. Homodimer. Interacts with FtsZ.

Its subcellular location is the cell membrane. In terms of biological role, cell division protein that is required for the assembly of the Z ring. May serve as a membrane anchor for the Z ring. Binds and hydrolyzes ATP. Also involved in sporulation. The polypeptide is Cell division protein FtsA (Bacillus subtilis (strain 168)).